The following is a 364-amino-acid chain: Aminomethyltransferase (364 aa).

This sequence belongs to the GcvT family. In terms of assembly, the glycine cleavage system is composed of four proteins: P, T, L and H.

The enzyme catalyses N(6)-[(R)-S(8)-aminomethyldihydrolipoyl]-L-lysyl-[protein] + (6S)-5,6,7,8-tetrahydrofolate = N(6)-[(R)-dihydrolipoyl]-L-lysyl-[protein] + (6R)-5,10-methylene-5,6,7,8-tetrahydrofolate + NH4(+). In terms of biological role, the glycine cleavage system catalyzes the degradation of glycine. The polypeptide is Aminomethyltransferase (Shewanella baltica (strain OS155 / ATCC BAA-1091)).